The primary structure comprises 351 residues: Uroporphyrinogen decarboxylase (351 aa).

Substrate-binding positions include 25–29, aspartate 74, tyrosine 151, serine 206, and histidine 325; that span reads RQAGR.

Belongs to the uroporphyrinogen decarboxylase family. Homodimer.

The protein resides in the cytoplasm. It catalyses the reaction uroporphyrinogen III + 4 H(+) = coproporphyrinogen III + 4 CO2. The protein operates within porphyrin-containing compound metabolism; protoporphyrin-IX biosynthesis; coproporphyrinogen-III from 5-aminolevulinate: step 4/4. In terms of biological role, catalyzes the decarboxylation of four acetate groups of uroporphyrinogen-III to yield coproporphyrinogen-III. The sequence is that of Uroporphyrinogen decarboxylase from Chlorobium luteolum (strain DSM 273 / BCRC 81028 / 2530) (Pelodictyon luteolum).